Here is a 320-residue protein sequence, read N- to C-terminus: MRSAQVYRWQIPMDAGVVLRDRRLKTRDGLYVCLREGEREGWGEISPLPGFSQETWEDAQSVLLAWVNNWLAGDCEIPQMPSVAFGVSCALAELAETLPQAANYRAAPLCNGDPDDLILKLADMPGEKVAKVKVGLYEAVRDGMVVNLLLEAIPDLHLRLDANRAWTPLKGQQFAKYVNPDYRHRIAFLEEPCKTRDDSRAFARETGIAIAWDESLREPDFAFVAEEGVRAVVIKPTLTGSLDKVREQVQAAHALGLTAVISSSIESSLGLTQLARIAAWLTPDTIPGLDTLDLMQAQQVRRWPGSPLPLVDVDALERLL.

The active-site Proton donor is the Lys-133. Residues Asp-161, Glu-190, and Asp-213 each contribute to the Mg(2+) site. Residue Lys-235 is the Proton acceptor of the active site.

This sequence belongs to the mandelate racemase/muconate lactonizing enzyme family. MenC type 1 subfamily. The cofactor is a divalent metal cation.

It catalyses the reaction (1R,6R)-6-hydroxy-2-succinyl-cyclohexa-2,4-diene-1-carboxylate = 2-succinylbenzoate + H2O. It participates in quinol/quinone metabolism; 1,4-dihydroxy-2-naphthoate biosynthesis; 1,4-dihydroxy-2-naphthoate from chorismate: step 4/7. The protein operates within quinol/quinone metabolism; menaquinone biosynthesis. In terms of biological role, converts 2-succinyl-6-hydroxy-2,4-cyclohexadiene-1-carboxylate (SHCHC) to 2-succinylbenzoate (OSB). The sequence is that of o-succinylbenzoate synthase from Escherichia coli O45:K1 (strain S88 / ExPEC).